The chain runs to 125 residues: Conopressin-conophysin, isoform 1 (125 aa).

The N-terminal stretch at 1-22 (MQMGRPTLLPCLLLLLVLSTQA) is a signal peptide. The cysteines at positions 23 and 28 are disulfide-linked. Gly-31 is modified (glycine amide). The propeptide occupies 32 to 39 (GKRDVHMI). 7 disulfide bridges follow: Cys-45–Cys-85, Cys-48–Cys-59, Cys-53–Cys-75, Cys-60–Cys-65, Cys-92–Cys-112, Cys-104–Cys-124, and Cys-113–Cys-118.

Belongs to the vasopressin/oxytocin family. In terms of tissue distribution, expressed by the venom gland.

The protein resides in the secreted. In terms of biological role, targets vasopressin-oxytocin related receptors. This chain is Conopressin-conophysin, isoform 1, found in Conus monile (Necklace cone).